An 815-amino-acid polypeptide reads, in one-letter code: BTB/POZ domain-containing protein KCTD3 (815 aa).

In terms of domain architecture, BTB spans 18-87; it reads EIVQLNVGGT…LRTKELDLRG (70 aa). The span at 139–168 shows a compositional bias: polar residues; it reads INNTVRSADSRNGLNSTEGEARGNGTQPVL. The tract at residues 139–170 is disordered; that stretch reads INNTVRSADSRNGLNSTEGEARGNGTQPVLSG. WD repeat units follow at residues 174 to 218, 224 to 263, 270 to 305, 310 to 342, 354 to 404, 412 to 449, 457 to 504, and 510 to 569; these read ETVR…GWQQ, YLDWTIERVALNAKVVGGPHGDKDKMVAVASESSIILWSV, SEIGVFSLGVPVDALFFIGNQLVATSHTGKVGVWNA, WQVQDVVPITSYDTAGSFLLLGCNNGSIYYIDM, LLVT…VQHP, QLFQTFTVHRSPVTKIMLSEKHLVSVCADNNHVRTWTV, STQP…IQKV, and KLFV…MWDL. The segment at 512–815 is interaction with HCN3; the sequence is FVRLSSTGKR…SDSSGQEYSL (304 aa). Phosphoserine occurs at positions 604, 664, and 711. The span at 736–758 shows a compositional bias: basic and acidic residues; sequence SESKKRSSEDENENKIEFRKKGG. Positions 736 to 815 are disordered; the sequence is SESKKRSSED…SDSSGQEYSL (80 aa). Over residues 774–800 the composition is skewed to low complexity; the sequence is ASSPSTSDGGTDSPGTASPSPTKTTPS. Ser793 is subject to Phosphoserine.

This sequence belongs to the KCTD3 family. Interacts with HCN3. In terms of tissue distribution, broadly expressed in normal tissues.

It is found in the cell membrane. Its function is as follows. Accessory subunit of potassium/sodium hyperpolarization-activated cyclic nucleotide-gated channel 3 (HCN3) up-regulating its cell-surface expression and current density without affecting its voltage dependence and kinetics. This Homo sapiens (Human) protein is BTB/POZ domain-containing protein KCTD3 (KCTD3).